The chain runs to 456 residues: L-seryl-tRNA(Sec) selenium transferase (456 aa).

Lys-288 is subject to N6-(pyridoxal phosphate)lysine.

It belongs to the SelA family. Pyridoxal 5'-phosphate is required as a cofactor.

The protein localises to the cytoplasm. The catalysed reaction is L-seryl-tRNA(Sec) + selenophosphate + H(+) = L-selenocysteinyl-tRNA(Sec) + phosphate. It participates in aminoacyl-tRNA biosynthesis; selenocysteinyl-tRNA(Sec) biosynthesis; selenocysteinyl-tRNA(Sec) from L-seryl-tRNA(Sec) (bacterial route): step 1/1. Converts seryl-tRNA(Sec) to selenocysteinyl-tRNA(Sec) required for selenoprotein biosynthesis. This is L-seryl-tRNA(Sec) selenium transferase from Helicobacter hepaticus (strain ATCC 51449 / 3B1).